The following is a 348-amino-acid chain: Holliday junction branch migration complex subunit RuvB (348 aa).

The tract at residues 1 to 182 (MRIELLNTPA…FGINSRFDYY (182 aa)) is large ATPase domain (RuvB-L). Residues I21, R22, G63, K66, T67, T68, 129-131 (EDF), R172, Y182, and R219 contribute to the ATP site. T67 contributes to the Mg(2+) binding site. The segment at 183–253 (SADLLEKIII…IAMTTLDCLE (71 aa)) is small ATPAse domain (RuvB-S). Positions 256–348 (EEGLDDMDKK…EFPLEDDQRQ (93 aa)) are head domain (RuvB-H). R311 and R316 together coordinate DNA.

The protein belongs to the RuvB family. In terms of assembly, homohexamer. Forms an RuvA(8)-RuvB(12)-Holliday junction (HJ) complex. HJ DNA is sandwiched between 2 RuvA tetramers; dsDNA enters through RuvA and exits via RuvB. An RuvB hexamer assembles on each DNA strand where it exits the tetramer. Each RuvB hexamer is contacted by two RuvA subunits (via domain III) on 2 adjacent RuvB subunits; this complex drives branch migration. In the full resolvosome a probable DNA-RuvA(4)-RuvB(12)-RuvC(2) complex forms which resolves the HJ.

It localises to the cytoplasm. The enzyme catalyses ATP + H2O = ADP + phosphate + H(+). The RuvA-RuvB-RuvC complex processes Holliday junction (HJ) DNA during genetic recombination and DNA repair, while the RuvA-RuvB complex plays an important role in the rescue of blocked DNA replication forks via replication fork reversal (RFR). RuvA specifically binds to HJ cruciform DNA, conferring on it an open structure. The RuvB hexamer acts as an ATP-dependent pump, pulling dsDNA into and through the RuvAB complex. RuvB forms 2 homohexamers on either side of HJ DNA bound by 1 or 2 RuvA tetramers; 4 subunits per hexamer contact DNA at a time. Coordinated motions by a converter formed by DNA-disengaged RuvB subunits stimulates ATP hydrolysis and nucleotide exchange. Immobilization of the converter enables RuvB to convert the ATP-contained energy into a lever motion, pulling 2 nucleotides of DNA out of the RuvA tetramer per ATP hydrolyzed, thus driving DNA branch migration. The RuvB motors rotate together with the DNA substrate, which together with the progressing nucleotide cycle form the mechanistic basis for DNA recombination by continuous HJ branch migration. Branch migration allows RuvC to scan DNA until it finds its consensus sequence, where it cleaves and resolves cruciform DNA. This chain is Holliday junction branch migration complex subunit RuvB, found in Chlorobium limicola (strain DSM 245 / NBRC 103803 / 6330).